A 434-amino-acid polypeptide reads, in one-letter code: Progestin and adipoQ receptor-like protein 1 (434 aa).

Topologically, residues 1–201 (MNPDEVNRAL…KSIWSLHTET (201 aa)) are cytoplasmic. Disordered stretches follow at residues 74–103 (LPQQEGHRSRATSFAGRIRAGSDDEAMPKH) and 118–137 (EINLQGTPDKRKDDEDELEV). The helical transmembrane segment at 202 to 222 (GNIWTHLIGCVAFFFLACWFL) threads the bilayer. Residues 223–234 (TRPDNHIQFQEK) lie on the Extracellular side of the membrane. Residues 235 to 255 (VVFSFFFAGAVLCLGLSFAFH) form a helical membrane-spanning segment. The Cytoplasmic portion of the chain corresponds to 256 to 273 (TLSCHSVNVVKIFCKLDY). The helical transmembrane segment at 274-294 (MGISLLIIGSFIPWIYYGFYC) threads the bilayer. The Extracellular portion of the chain corresponds to 295–299 (RREPK). A helical membrane pass occupies residues 300 to 320 (ITYIAMVSVLGIGAIVVSLWD). The Cytoplasmic segment spans residues 321 to 331 (KFSESRFRPIR). The helical transmembrane segment at 332 to 352 (AAVFVGMGCSGVIPTIHYIIT) threads the bilayer. The Extracellular portion of the chain corresponds to 353–362 (DGVHSLFADN). A helical membrane pass occupies residues 363-383 (SFHWLLLMAFLYLLGAGLYAT). Over 384 to 403 (RTPERFFPGKCDIWFQSHQL) the chain is Cytoplasmic. The helical transmembrane segment at 404–424 (FHTCVVIAAFVHYYGISEMAF) threads the bilayer. Residues 425 to 434 (ARLNEQCPVR) lie on the Extracellular side of the membrane.

This sequence belongs to the ADIPOR family.

The protein resides in the membrane. Its function is as follows. Probable receptor, which may be involved in metabolic pathways that regulate lipid metabolism such as fatty acid oxidation. The sequence is that of Progestin and adipoQ receptor-like protein 1 (paqr-1) from Caenorhabditis elegans.